Here is a 274-residue protein sequence, read N- to C-terminus: Malonyl-[acyl-carrier protein] O-methyltransferase (274 aa).

Belongs to the methyltransferase superfamily.

The catalysed reaction is malonyl-[ACP] + S-adenosyl-L-methionine = malonyl-[ACP] methyl ester + S-adenosyl-L-homocysteine. It functions in the pathway cofactor biosynthesis; biotin biosynthesis. Its function is as follows. Converts the free carboxyl group of a malonyl-thioester to its methyl ester by transfer of a methyl group from S-adenosyl-L-methionine (SAM). It allows to synthesize pimeloyl-ACP via the fatty acid synthetic pathway. The chain is Malonyl-[acyl-carrier protein] O-methyltransferase from Priestia megaterium (strain DSM 319 / IMG 1521) (Bacillus megaterium).